Consider the following 314-residue polypeptide: uncharacterized protein (314 aa).

The segment at 1–71 (MAGNSQRRGA…QRAGRKADET (71 aa)) is disordered. Positions 266, 286, and 295 each coordinate S-adenosyl-L-methionine.

Belongs to the class IV-like SAM-binding methyltransferase superfamily. RNA methyltransferase TrmH family.

This is an uncharacterized protein from Mycolicibacterium smegmatis (strain ATCC 700084 / mc(2)155) (Mycobacterium smegmatis).